A 394-amino-acid chain; its full sequence is MSQNRPAAFNTLRMGEVIREKVQDGITGETRDLQYTQCKIVGNGSFGVVFQTKLSPSNEDAAIKRVLQDKRFKNRELQIMRIVRHPNIVQLKAFYYSNGERRDEVYLNLVQEFVPETVYRASRFFNKMKTTMPILEVKLYIYQLFRALAYIHSQGICHRDIKPQNLLLDPTTGILKLCDFGSAKILVENEPNVSYICSRYYRAPELIFGATNYTTKIDVWSTGCVMAELMLGQPLFPGESGIDQLVEIIKVLGTPTREQIRTMNPNYMEHKFPQIKPHPFNRVLRKADNNAIDLIARLLEYTPTERLGAIDAMVHPFFDDLRNPSTKLPDSRHQTGQVRDLPPLFDFNRHELSIAPQLNHQLVPPHVRPTLAAQGLDIDHFTPMRKEDMLARLD.

Residues 35 to 318 (YTQCKIVGNG…AIDAMVHPFF (284 aa)) form the Protein kinase domain. Residues 41–49 (VGNGSFGVV) and Lys-64 contribute to the ATP site.

It belongs to the protein kinase superfamily. CMGC Ser/Thr protein kinase family. GSK-3 subfamily.

It is found in the cytoplasm. The enzyme catalyses L-seryl-[protein] + ATP = O-phospho-L-seryl-[protein] + ADP + H(+). Protein kinase that acts downstream of the MPS1 MAPK cascade as a highly conservative signal modulator that dictates growth, conidiation and pathogenicity. Phosphorylates HAT1 at 'Ser-8' to block its translocation from the nucleus to the cytoplasm where HAT1 positively regulates appressorium development and pathogenicity. This Pyricularia oryzae (Rice blast fungus) protein is Glycogen synthase kinase 1.